The primary structure comprises 278 residues: NAD-capped RNA hydrolase NudC (278 aa).

Arg-84 contributes to the substrate binding site. Residues Cys-114 and Cys-117 each contribute to the Zn(2+) site. Glu-127 contributes to the substrate binding site. Zn(2+)-binding residues include Cys-132 and Cys-135. Tyr-140 contacts substrate. The Nudix hydrolase domain maps to 141–265 (PRLSPSMIVL…IARHLIDLYL (125 aa)). A divalent metal cation is bound by residues Ala-174, Glu-190, and Glu-194. A Nudix box motif is present at residues 175-196 (GFVEAGESVEQCVVREVREEVG). 208-215 (QNWPFPHS) is a substrate binding site. Position 235 (Glu-235) interacts with a divalent metal cation. Residue Ala-257 participates in substrate binding.

This sequence belongs to the Nudix hydrolase family. NudC subfamily. Homodimer. It depends on Mg(2+) as a cofactor. Requires Mn(2+) as cofactor. Zn(2+) is required as a cofactor.

The enzyme catalyses a 5'-end NAD(+)-phospho-ribonucleoside in mRNA + H2O = a 5'-end phospho-adenosine-phospho-ribonucleoside in mRNA + beta-nicotinamide D-ribonucleotide + 2 H(+). It carries out the reaction NAD(+) + H2O = beta-nicotinamide D-ribonucleotide + AMP + 2 H(+). It catalyses the reaction NADH + H2O = reduced beta-nicotinamide D-ribonucleotide + AMP + 2 H(+). Its function is as follows. mRNA decapping enzyme that specifically removes the nicotinamide adenine dinucleotide (NAD) cap from a subset of mRNAs by hydrolyzing the diphosphate linkage to produce nicotinamide mononucleotide (NMN) and 5' monophosphate mRNA. The NAD-cap is present at the 5'-end of some mRNAs and stabilizes RNA against 5'-processing. Has preference for mRNAs with a 5'-end purine. Catalyzes the hydrolysis of a broad range of dinucleotide pyrophosphates. This is NAD-capped RNA hydrolase NudC from Pseudomonas aeruginosa (strain LESB58).